The primary structure comprises 633 residues: Chaperone protein HtpG (633 aa).

The segment at 1–344 (MSLQPQAETL…SNDLPLNISR (344 aa)) is a; substrate-binding. The interval 345-560 (ELLQSNEVIN…ENEMSGHLQR (216 aa)) is b. The tract at residues 561–633 (LLIQTGQDFM…KGLNELLLDS (73 aa)) is c.

This sequence belongs to the heat shock protein 90 family. In terms of assembly, homodimer.

The protein localises to the cytoplasm. In terms of biological role, molecular chaperone. Has ATPase activity. This is Chaperone protein HtpG from Coxiella burnetii (strain RSA 493 / Nine Mile phase I).